The chain runs to 250 residues: Deoxynucleoside kinase (250 aa).

ATP is bound at residue 27–35; that stretch reads GNIGSGKTT. Substrate-binding residues include Glu52, Tyr70, and Gln81. Glu104 serves as the catalytic Proton acceptor. Substrate-binding residues include Arg105 and Glu172. Phosphoserine occurs at positions 236, 241, and 243.

Belongs to the DCK/DGK family. As to quaternary structure, monomer.

It catalyses the reaction a 2'-deoxyribonucleoside + ATP = a 2'-deoxyribonucleoside 5'-phosphate + ADP + H(+). With respect to regulation, subject to feedback inhibition by dTTP. Functionally, deoxyribonucleoside kinase that has a broad specificity phosphorylating thymidine, 2'-deoxyriboadenosine, 2'-deoxyribocytidine and 2'-deoxyriboguanosine. Specificity is higher for pyrimidine nucleosides. Several anti-viral and anti-cancer nucleoside analogs are also efficiently phosphorylated. In Drosophila melanogaster (Fruit fly), this protein is Deoxynucleoside kinase (dnk).